The sequence spans 287 residues: Pantothenate synthetase (287 aa).

30–37 (MGNLHSGH) contributes to the ATP binding site. His-37 serves as the catalytic Proton donor. Gln-61 provides a ligand contact to (R)-pantoate. Gln-61 contributes to the beta-alanine binding site. 149–152 (GEKD) contacts ATP. A (R)-pantoate-binding site is contributed by Gln-155. ATP is bound by residues Val-178 and 186-189 (LSSR).

It belongs to the pantothenate synthetase family. Homodimer.

The protein localises to the cytoplasm. The enzyme catalyses (R)-pantoate + beta-alanine + ATP = (R)-pantothenate + AMP + diphosphate + H(+). Its pathway is cofactor biosynthesis; (R)-pantothenate biosynthesis; (R)-pantothenate from (R)-pantoate and beta-alanine: step 1/1. In terms of biological role, catalyzes the condensation of pantoate with beta-alanine in an ATP-dependent reaction via a pantoyl-adenylate intermediate. The polypeptide is Pantothenate synthetase (Pseudomonas entomophila (strain L48)).